The primary structure comprises 424 residues: 3-isopropylmalate dehydratase large subunit 1 (424 aa).

C303, C363, and C366 together coordinate [4Fe-4S] cluster.

The protein belongs to the aconitase/IPM isomerase family. LeuC type 2 subfamily. Heterodimer of LeuC and LeuD. The cofactor is [4Fe-4S] cluster.

It catalyses the reaction (2R,3S)-3-isopropylmalate = (2S)-2-isopropylmalate. The protein operates within amino-acid biosynthesis; L-leucine biosynthesis; L-leucine from 3-methyl-2-oxobutanoate: step 2/4. Its function is as follows. Catalyzes the isomerization between 2-isopropylmalate and 3-isopropylmalate, via the formation of 2-isopropylmaleate. This is 3-isopropylmalate dehydratase large subunit 1 from Pyrococcus furiosus (strain ATCC 43587 / DSM 3638 / JCM 8422 / Vc1).